A 139-amino-acid chain; its full sequence is Large-conductance mechanosensitive channel (139 aa).

Transmembrane regions (helical) follow at residues 16-36 and 83-103; these read VIDLAVGVIIGAAFGKIVDSL and GQFINTTIDFLIIAFAIFVAV.

Belongs to the MscL family. In terms of assembly, homopentamer.

It is found in the cell inner membrane. Functionally, channel that opens in response to stretch forces in the membrane lipid bilayer. May participate in the regulation of osmotic pressure changes within the cell. This Aromatoleum aromaticum (strain DSM 19018 / LMG 30748 / EbN1) (Azoarcus sp. (strain EbN1)) protein is Large-conductance mechanosensitive channel.